Consider the following 575-residue polypeptide: MSRGLELLIAQTILQGFDAQYGRFLEVTSGAQQRFEQADWHAVQQAMKSRIHLYDHHVGLVVEQLRCITDGKSTDAAFLLRVKEHYTRLLPDYPRFEIAESFFNSVYCRLFDHRSLTPERLFIFSSQPERRFRTIPRPLAKDFFPDHGWEPLLTRILSDLPLRLPWQNKSRDIHYIIAHLTETFGAEALHRSHLQVANELFYRNKAAWLVGKLLTPAGTLPFLLPIHRTDEGELFVDTCLTTTAEASIVFGFARSYFMVYAPLPAALVEWLREILPGKTTAELYMAIGCQKHAKTESYREYLLYLANSDEQFIEAPGIRGMVMLVFTLPGFDRVFKIIKDRFAPQKEMSAAHVRACYQLVKEHDRVGRMADTQEFENFVLEKRRIAPALMTLLRQEAPEKIIDLGDQIVIRHLYIERRMVPLNIWLEQVEGQQLRDAIEEYGNAIRQLAAANIFPGDMLFKNFGVTRHGRVVFYDYDEICYMTEVNFRDIPQARYPEDELASEPWYSVSPGDVFPEEFRHWLCADPRIGPLFEEMHADLFRADYWRALQTRIREGHVEDVYAYRRKQRFCFRFAA.

Residues 315-321 (APGIRGM) and lysine 336 contribute to the ATP site. Residue aspartate 371 is part of the active site.

This sequence belongs to the AceK family.

It localises to the cytoplasm. The enzyme catalyses L-seryl-[isocitrate dehydrogenase] + ATP = O-phospho-L-seryl-[isocitrate dehydrogenase] + ADP + H(+). Bifunctional enzyme which can phosphorylate or dephosphorylate isocitrate dehydrogenase (IDH) on a specific serine residue. This is a regulatory mechanism which enables bacteria to bypass the Krebs cycle via the glyoxylate shunt in response to the source of carbon. When bacteria are grown on glucose, IDH is fully active and unphosphorylated, but when grown on acetate or ethanol, the activity of IDH declines drastically concomitant with its phosphorylation. The polypeptide is Isocitrate dehydrogenase kinase/phosphatase (Citrobacter koseri (strain ATCC BAA-895 / CDC 4225-83 / SGSC4696)).